Reading from the N-terminus, the 408-residue chain is LIN1-like protein (408 aa).

The tract at residues 1-161 (MKRTLRNPGN…SVPSSPKRMS (161 aa)) is disordered. The segment covering 41–52 (YYESESEEDEDQ) has biased composition (acidic residues). Composition is skewed to basic and acidic residues over residues 53–62 (ILNKEKKEGQ), 73–109 (DEKRTLPNDEAQKRRDFIENGDAERLAHKGLRNKEVL), and 119–129 (NGKYSKLRYED). The 59-residue stretch at 344–402 (SSQYNFKWEFDDKTYGPYTASQIQAWSNEGYFTDAKHAAFIQLANMDEWMYPNNICFCD) folds into the GYF domain.

This sequence belongs to the LIN1 family.

This chain is LIN1-like protein, found in Schizosaccharomyces pombe (strain 972 / ATCC 24843) (Fission yeast).